The chain runs to 154 residues: Small ribosomal subunit protein bS18 (154 aa).

A disordered region spans residues 1 to 82; that stretch reads MEKKTTKKAT…PFAKYNRGYP (82 aa). Residues 8–19 are compositionally biased toward low complexity; it reads KATASKTTTTKK. Residues 20–32 are compositionally biased toward basic and acidic residues; sequence AAAEKTEIKETKK. Residues 33–49 show a composition bias toward low complexity; sequence TTTTKTSTAKKATTASV. Residues 50–69 show a composition bias toward basic and acidic residues; that stretch reads EKTEVKETKKSSDNKKEFNP.

Belongs to the bacterial ribosomal protein bS18 family. Part of the 30S ribosomal subunit. Forms a tight heterodimer with protein bS6.

Its function is as follows. Binds as a heterodimer with protein bS6 to the central domain of the 16S rRNA, where it helps stabilize the platform of the 30S subunit. This Malacoplasma penetrans (strain HF-2) (Mycoplasma penetrans) protein is Small ribosomal subunit protein bS18.